Here is a 274-residue protein sequence, read N- to C-terminus: uncharacterized protein (274 aa).

Residues 1–30 form the signal peptide; that stretch reads MTVYTPTSERQAPATTHRQMWALGDYAAIA.

To M.tuberculosis Rv1405c.

This is an uncharacterized protein from Mycobacterium tuberculosis (strain CDC 1551 / Oshkosh).